We begin with the raw amino-acid sequence, 648 residues long: MVSLPPPQSDVTLPGPTRLEGERQGDLMQAPGLPGSPAPQSKHAGFSCSSFVSDGPPERTPSLPPHSPRIASPGPEQVQGHCPAGPGPGPFRLSPSDKYPGFGFEEAAASSPGRFLKGSHAPFHPYKRPFHEDVFPEAETTLALKGHSFKTPGPLEAFEEIPVDVAEAEAFLPGFSAEAWCNGLPYPSQEHGPQVLGSEVKVKPPVLESGAGMFCYQPPLQHMYCSSQPPFHQYSPGGGSYPIPYLGSSHYQYQRMAPQASTDGHQPLFPKPIYSYSILIFMALKNSKTGSLPVSEIYNFMTEHFPYFKTAPDGWKNSVRHNLSLNKCFEKVENKSGSSSRKGCLWALNPAKIDKMQEELQKWKRKDPIAVRKSMAKPEELDSLIGDKREKLGSPLLGCPPPGLSGSGPIRPLAPPAGLSPPLHSLHPAPGPIPGKNPLQDLLMGHTPSCYGQTYLHLSPGLAPPGPPQPLFPQPDGHLELRAQPGTPQDSPLPAHTPPSHSAKLLAEPSPARTMHDTLLPDGDLGTDLDAINPSLTDFDFQGNLWEQLKDDSLALDPLVLVTSSPTSSSMPPPQPPPHCFPPGPCLTETGSGAGDLAAPGSGGSGALGDLHLTTLYSAFMELEPTPPTAPAGPSVYLSPSSKPVALA.

The interval 1 to 105 (MVSLPPPQSD…SDKYPGFGFE (105 aa)) is disordered. The span at 58-67 (ERTPSLPPHS) shows a compositional bias: pro residues. A DNA-binding region (fork-head) is located at residues 271–367 (KPIYSYSILI…EELQKWKRKD (97 aa)). Disordered stretches follow at residues 392 to 445 (LGSP…LLMG), 458 to 508 (LSPG…LLAE), and 623 to 648 (LEPTPPTAPAGPSVYLSPSSKPVALA). Residues 462–473 (LAPPGPPQPLFP) are compositionally biased toward pro residues.

Expressed in thymus.

It localises to the nucleus. Its function is as follows. Transcriptional regulator which regulates the development, differentiation, and function of thymic epithelial cells (TECs) both in the prenatal and postnatal thymus. Acts as a master regulator of the TECs lineage development and is required from the onset of differentiation in progenitor TECs in the developing fetus to the final differentiation steps through which TECs mature to acquire their full functionality. Regulates, either directly or indirectly the expression of a variety of genes that mediate diverse aspects of thymus development and function, including MHC Class II, DLL4, CCL25, CTSL, CD40 and PAX1. Regulates the differentiation of the immature TECs into functional cortical TECs (cTECs) and medullary TECs (mTECs). Essential for maintenance of mTECs population in the postnatal thymus. Involved in the morphogenesis and maintenance of the three-dimensional thymic microstructure which is necessary for a fully functional thymus. Plays an important role in the maintenance of hematopoiesis and particularly T lineage progenitors within the bone marrow niche with age. Essential for the vascularization of the thymus anlage. Promotes the terminal differentiation of epithelial cells in the epidermis and hair follicles, partly by negatively regulating the activity of protein kinase C. Plays a crucial role in the early prenatal stages of T-cell ontogeny. The sequence is that of Forkhead box protein N1 (FOXN1) from Homo sapiens (Human).